The following is a 445-amino-acid chain: Glutamate--tRNA ligase 1 (445 aa).

The short motif at 8–18 is the 'HIGH' region element; the sequence is PSPTGKLHVGN. The 'KMSKS' region signature appears at 239 to 243; it reads KLSKR. Lys-242 contributes to the ATP binding site.

Belongs to the class-I aminoacyl-tRNA synthetase family. Glutamate--tRNA ligase type 1 subfamily. In terms of assembly, monomer.

The protein localises to the cytoplasm. The catalysed reaction is tRNA(Glu) + L-glutamate + ATP = L-glutamyl-tRNA(Glu) + AMP + diphosphate. Its function is as follows. Catalyzes the attachment of glutamate to tRNA(Glu) in a two-step reaction: glutamate is first activated by ATP to form Glu-AMP and then transferred to the acceptor end of tRNA(Glu). In Maricaulis maris (strain MCS10) (Caulobacter maris), this protein is Glutamate--tRNA ligase 1.